The primary structure comprises 350 residues: Transmembrane protein 185B (350 aa).

A run of 7 helical transmembrane segments spans residues 16–36 (LIYA…DGVI), 41–61 (WAVF…ASVG), 81–101 (FKAM…EVLV), 111–131 (FWLL…AACV), 168–188 (WLVV…VVLY), 211–231 (VTMA…EVLL), and 240–260 (MFSY…LMAT).

The protein belongs to the TMEM185 family.

The protein localises to the membrane. The sequence is that of Transmembrane protein 185B (TMEM185B) from Bos taurus (Bovine).